The primary structure comprises 356 residues: C-C chemokine receptor type 8 (356 aa).

Over 1-35 (MDYTLDPSMTTMTDYYYPDSLSSPCDGELIQRNDK) the chain is Extracellular. Residues 36–63 (LLLAVFYCLLFVFSLLGNSLVILVLVVC) traverse the membrane as a helical segment. The Cytoplasmic portion of the chain corresponds to 64–73 (KKLRNITDIY). A helical transmembrane segment spans residues 74–93 (LLNLALSDLLFVFSFPFQTY). Residues 94 to 107 (YQLDQWVFGTVMCK) are Extracellular-facing. Cys-106 and Cys-184 form a disulfide bridge. A helical membrane pass occupies residues 108–129 (VVSGFYYIGFYSSMFFITLMSV). The Cytoplasmic portion of the chain corresponds to 130-146 (DRYLAVVHAVYAIKVRT). The chain crosses the membrane as a helical span at residues 147–172 (IRMGTTTLSLLVWLTAIMATIPLLVF). Residues 173 to 203 (YQVASEDGVLQCYSFYNQQTLKWKIFTNFEM) lie on the Extracellular side of the membrane. Residues 204 to 223 (NILGLLIPFTIFMFCYIKIL) form a helical membrane-spanning segment. Over 224–239 (HQLKRCQNHNKTKAIR) the chain is Cytoplasmic. The helical transmembrane segment at 240–264 (LVLIVVIASLLFWVPFNVVLFLTSL) threads the bilayer. The Extracellular segment spans residues 265-281 (HSMHILDGCSISQQLNY). Residues 282–305 (ATHVTEIISFTHCCVNPVIYAFVG) form a helical membrane-spanning segment. Residues 306 to 356 (EKFKKHLSEIFQKSCSHIFIYLGRQMPRESCEKSSSCQQHSFRSSSIDYIL) lie on the Cytoplasmic side of the membrane.

It belongs to the G-protein coupled receptor 1 family.

It localises to the cell membrane. In terms of biological role, receptor for the chemokines CCL1/SCYA1/I-309. May regulate monocyte chemotaxis and thymic cell line apoptosis. This Macaca mulatta (Rhesus macaque) protein is C-C chemokine receptor type 8 (CCR8).